A 524-amino-acid polypeptide reads, in one-letter code: MVPQVLLFVPLLVFSMCFGKFPIYTIPDKLGPWSPIDIHHLSCPNNLVVEDEGCTNLSGFSYMELKVGYISAIKVNGFTCTGVVTEAETYTNFVGYVTTTFKRKHFRPTPDACRAAYNWKMAGDPRYEESLHNPYPDYHWLRTVKTTKESLVIISPSVADLDPYDKSLHSRVFPSGKCSGITISSTYCSTNHDYTIWMPENPRLGTSCDIFTNSRGKRASKGGKTCGFVDERGLYKSLKGACKLKLCGVLGLRLMDGTWVAMQTSDETKWCPPDQLVNLHDFRSDEIEHLVVEELVKKREECLDALESIMATKSVSFRRLSHLRKLVPGFGKAYTIFNKTLMEADAHYKSVRTWNEIIPSKGCLRVGGRCHPHVNGVFFNGIILGPDGHVLIPEMQSSLLQQHMELLESSVIPLMHPLADPSTVFKDGDEAEDFVEVHLPDVHKQISGVDLGLPSWGKYVLVSAGVLVVLMLTIFIMTCCGRVHRPKSTQHGLGGTGRKVSVTSQSGKVISSWESYKSGGETRL.

A signal peptide spans 1–19; it reads MVPQVLLFVPLLVFSMCFG. Residues 20–459 lie on the Virion surface side of the membrane; it reads KFPIYTIPDK…DLGLPSWGKY (440 aa). Disulfide bonds link C43-C302, C54-C226, C80-C113, C178-C188, C208-C247, and C242-C271. Residue N56 is glycosylated (N-linked (GlcNAc...) asparagine; by host). N-linked (GlcNAc...) asparagine; by host glycosylation is present at N338. The cysteines at positions 363 and 370 are disulfide-linked. Residues 460-480 traverse the membrane as a helical segment; the sequence is VLVSAGVLVVLMLTIFIMTCC. A lipid anchor (S-palmitoyl cysteine; by host) is attached at C480. Topologically, residues 481 to 524 are intravirion; that stretch reads GRVHRPKSTQHGLGGTGRKVSVTSQSGKVISSWESYKSGGETRL.

The protein belongs to the lyssavirus glycoprotein family. In terms of assembly, homotrimer. Interacts with matrix protein. Interacts with host TRFC. Interacts with host BST2; this interaction inhibits viral budding by tethering new virions to the cell surface. Interacts with ITGB1. Interacts with host GRM2. Post-translationally, glycosylated and palmitoylated by host. Glycosylation is crucial for glycoprotein export at the cell surface.

It localises to the virion membrane. Its function is as follows. Attaches the virus to host cellular receptor, inducing endocytosis of the virion by using different host proteins including TFRC, GRM2 and ITGB1. In the endosome, the acidic pH induces conformational changes in the glycoprotein trimer, which trigger fusion between virus and cell membrane. There is convincing in vitro evidence that the muscular form of the nicotinic acetylcholine receptor (nAChR), the neuronal cell adhesion molecule (NCAM), and the p75 neurotrophin receptor (p75NTR) bind glycoprotein and thereby facilitate rabies virus entry into cells. This Homo sapiens (Human) protein is Glycoprotein (G).